The primary structure comprises 136 residues: DUF35 domain-containing scaffold protein (136 aa).

Positions 25, 38, and 41 each coordinate Zn(2+).

It belongs to the scaffold protein DUF35 family. As to quaternary structure, interacts with acetoacetyl-CoA thiolase and HMG-CoA synthase (HMGCS) that catalyzes the first and second step in the mevalonate pathway, respectively.

Its function is as follows. Functions as a scaffold to connect the acetoacetyl-CoA thiolase and HMG-CoA synthase (HMGCS) dimers in the channeling thiolase/HMGCS complex, which allows for efficient coupling of the endergonic thiolase reaction with the exergonic HMGCS reaction. The chain is DUF35 domain-containing scaffold protein from Pyrococcus furiosus (strain ATCC 43587 / DSM 3638 / JCM 8422 / Vc1).